We begin with the raw amino-acid sequence, 168 residues long: Lipoprotein signal peptidase (168 aa).

The next 3 membrane-spanning stretches (helical) occupy residues 8-28, 61-81, and 91-111; these read LYYLLAFVVILIDQWTKWLVV, GQFWLFYLITIVVVVGIVIYI, and FGIALGLMLGGALGNFIDRIF. Residues D117 and D135 contribute to the active site. Residues 128–148 traverse the membrane as a helical segment; it reads FPIFNVADAALTIGVALMFIY.

It belongs to the peptidase A8 family.

It localises to the cell membrane. The catalysed reaction is Release of signal peptides from bacterial membrane prolipoproteins. Hydrolyzes -Xaa-Yaa-Zaa-|-(S,diacylglyceryl)Cys-, in which Xaa is hydrophobic (preferably Leu), and Yaa (Ala or Ser) and Zaa (Gly or Ala) have small, neutral side chains.. The protein operates within protein modification; lipoprotein biosynthesis (signal peptide cleavage). Functionally, this protein specifically catalyzes the removal of signal peptides from prolipoproteins. The polypeptide is Lipoprotein signal peptidase (Anoxybacillus flavithermus (strain DSM 21510 / WK1)).